Consider the following 604-residue polypeptide: Elongation factor 4 (604 aa).

One can recognise a tr-type G domain in the interval 7-189; that stretch reads SRIRNFSIIA…SIVHLVPPPD (183 aa). Residues 19–24 and 136–139 each bind GTP; these read DHGKST and NKID.

This sequence belongs to the TRAFAC class translation factor GTPase superfamily. Classic translation factor GTPase family. LepA subfamily.

It localises to the cell inner membrane. It carries out the reaction GTP + H2O = GDP + phosphate + H(+). Functionally, required for accurate and efficient protein synthesis under certain stress conditions. May act as a fidelity factor of the translation reaction, by catalyzing a one-codon backward translocation of tRNAs on improperly translocated ribosomes. Back-translocation proceeds from a post-translocation (POST) complex to a pre-translocation (PRE) complex, thus giving elongation factor G a second chance to translocate the tRNAs correctly. Binds to ribosomes in a GTP-dependent manner. This chain is Elongation factor 4, found in Gloeothece citriformis (strain PCC 7424) (Cyanothece sp. (strain PCC 7424)).